Reading from the N-terminus, the 311-residue chain is tRNA-cytidine(32) 2-sulfurtransferase (311 aa).

Residues 47–52 (SGGKDS) carry the PP-loop motif motif. 3 residues coordinate [4Fe-4S] cluster: Cys-122, Cys-125, and Cys-213.

The protein belongs to the TtcA family. Homodimer. The cofactor is Mg(2+). [4Fe-4S] cluster serves as cofactor.

It localises to the cytoplasm. The catalysed reaction is cytidine(32) in tRNA + S-sulfanyl-L-cysteinyl-[cysteine desulfurase] + AH2 + ATP = 2-thiocytidine(32) in tRNA + L-cysteinyl-[cysteine desulfurase] + A + AMP + diphosphate + H(+). It functions in the pathway tRNA modification. Its function is as follows. Catalyzes the ATP-dependent 2-thiolation of cytidine in position 32 of tRNA, to form 2-thiocytidine (s(2)C32). The sulfur atoms are provided by the cysteine/cysteine desulfurase (IscS) system. The sequence is that of tRNA-cytidine(32) 2-sulfurtransferase from Escherichia coli O45:K1 (strain S88 / ExPEC).